We begin with the raw amino-acid sequence, 359 residues long: Tyrosine-protein phosphatase non-receptor type 7 (359 aa).

The tract at residues 1–34 is disordered; the sequence is MVQACEGRSRAQLPTLSLGADMTQPPPAKAPAKK. Residues 38–51 are interaction with MAP kinases; it reads LQERRGSSVALMLD. Residue Ser-44 is modified to Phosphoserine. Thr-66 bears the Phosphothreonine mark. Phosphoserine occurs at positions 93 and 143. In terms of domain architecture, Tyrosine-protein phosphatase spans 97 to 349; the sequence is LEEEFLKIPS…QFLHHTLALY (253 aa). Substrate is bound by residues Asp-257, 290 to 296, and Gln-334; that span reads CSAGIGR. Cys-290 acts as the Phosphocysteine intermediate in catalysis. A Cysteine sulfenic acid (-SOH) modification is found at Cys-290.

The protein belongs to the protein-tyrosine phosphatase family. Non-receptor class subfamily. Oxidized at active site cysteine. Treatment with pervanadate (vanadate and H(2)O(2)) or with antigen enhanced oxidation of active site cysteine.

The protein localises to the cytoplasm. It is found in the cytoskeleton. The catalysed reaction is O-phospho-L-tyrosyl-[protein] + H2O = L-tyrosyl-[protein] + phosphate. Inhibited in cells after FCER1A triggering. Functionally, may play a role in the regulation of T and B-lymphocyte development and signal transduction. The chain is Tyrosine-protein phosphatase non-receptor type 7 (Ptpn7) from Rattus norvegicus (Rat).